The chain runs to 58 residues: Preprotein translocase subunit SecG (58 aa).

The Cytoplasmic segment spans residues 1–32 (MARKRRKGGEGLVTAIGLVRFYEEVEEKIKVP). Residues 33 to 54 (PEAVIGAAFALSIMTIALDLLL) form a helical membrane-spanning segment. At 55 to 58 (KAAR) the chain is on the extracellular side.

The protein belongs to the SEC61-beta family. In terms of assembly, component of the protein translocase complex. Heterotrimer consisting of alpha (SecY), beta (SecG) and gamma (SecE) subunits. Can form oligomers of the heterotrimer.

The protein resides in the cell membrane. Its function is as follows. Involved in protein export. The function of the beta subunit is unknown, but it may be involved in stabilization of the trimeric complex. In Ignicoccus hospitalis (strain KIN4/I / DSM 18386 / JCM 14125), this protein is Preprotein translocase subunit SecG.